The sequence spans 221 residues: Protein-L-isoaspartate O-methyltransferase (221 aa).

The active site involves serine 68.

It belongs to the methyltransferase superfamily. L-isoaspartyl/D-aspartyl protein methyltransferase family.

It localises to the cytoplasm. The enzyme catalyses [protein]-L-isoaspartate + S-adenosyl-L-methionine = [protein]-L-isoaspartate alpha-methyl ester + S-adenosyl-L-homocysteine. Functionally, catalyzes the methyl esterification of L-isoaspartyl residues in peptides and proteins that result from spontaneous decomposition of normal L-aspartyl and L-asparaginyl residues. It plays a role in the repair and/or degradation of damaged proteins. This is Protein-L-isoaspartate O-methyltransferase from Desulfosudis oleivorans (strain DSM 6200 / JCM 39069 / Hxd3) (Desulfococcus oleovorans).